Reading from the N-terminus, the 565-residue chain is Thiol:disulfide interchange protein DsbD (565 aa).

Positions 1 to 19 are cleaved as a signal peptide; the sequence is MAQRIFTLILLLCSTSVFA. 2 cysteine pairs are disulfide-bonded: Cys122–Cys128 and Cys182–Cys304. The next 7 helical transmembrane spans lie at 163–183, 208–228, 243–263, 289–309, 323–343, 357–377, and 384–404; these read LPFS…TPCV, LLTF…GLVV, YVLI…FGLF, GVFI…TAPL, WLGG…LMLI, WMEQ…VFLL, and IWGL…AFIT. The region spanning 434 to 565 is the Thioredoxin domain; sequence WAFGETHTAQ…FSAHLRDRQP (132 aa). Cys480 and Cys483 are joined by a disulfide.

It belongs to the thioredoxin family. DsbD subfamily.

The protein localises to the cell inner membrane. The catalysed reaction is [protein]-dithiol + NAD(+) = [protein]-disulfide + NADH + H(+). The enzyme catalyses [protein]-dithiol + NADP(+) = [protein]-disulfide + NADPH + H(+). Functionally, required to facilitate the formation of correct disulfide bonds in some periplasmic proteins and for the assembly of the periplasmic c-type cytochromes. Acts by transferring electrons from cytoplasmic thioredoxin to the periplasm. This transfer involves a cascade of disulfide bond formation and reduction steps. This is Thiol:disulfide interchange protein DsbD from Escherichia coli O6:K15:H31 (strain 536 / UPEC).